A 715-amino-acid chain; its full sequence is Polyribonucleotide nucleotidyltransferase (715 aa).

Mg(2+) is bound by residues Asp-488 and Asp-494. The region spanning 555–614 is the KH domain; the sequence is PKIETIKIPVDKIREVIGSGGKVIREIVEKTGAKIDIGEDGTIKIAAAEQTKIDAAKEWI. The region spanning 624 to 692 is the S1 motif domain; the sequence is GQIYTGKVVK…DRGKTRLSMK (69 aa). The interval 692 to 715 is disordered; sequence KVVDQETGEDLSKSNEKAEEPADA. The span at 701–715 shows a compositional bias: basic and acidic residues; that stretch reads DLSKSNEKAEEPADA.

It belongs to the polyribonucleotide nucleotidyltransferase family. Mg(2+) is required as a cofactor.

It is found in the cytoplasm. It catalyses the reaction RNA(n+1) + phosphate = RNA(n) + a ribonucleoside 5'-diphosphate. Functionally, involved in mRNA degradation. Catalyzes the phosphorolysis of single-stranded polyribonucleotides processively in the 3'- to 5'-direction. The protein is Polyribonucleotide nucleotidyltransferase of Phenylobacterium zucineum (strain HLK1).